A 507-amino-acid polypeptide reads, in one-letter code: F-box only protein 31 (507 aa).

Positions Arg19–Glu42 are disordered. Phosphoserine is present on Ser33. The span at Ser33–Glu42 shows a compositional bias: acidic residues. Thr37 carries the post-translational modification Phosphothreonine. The D box motif lies at Arg50–Glu55. The region spanning Arg50 to Arg96 is the F-box domain. Residues Cys192, His200, Cys216, and His222 each contribute to the Zn(2+) site. Ser264 is modified (phosphoserine; by ATM). Positions Asp283–Leu285 match the DDL motif motif. Residues Arg364–Ser421 are disordered. Basic and acidic residues predominate over residues Ala374 to Glu385. Phosphoserine is present on Ser448.

This sequence belongs to the FBXO31 family. Part of a SCF (SKP1-cullin-F-box) protein ligase complex SCF(FBXO31) composed of CUL1, SKP1, RBX1 and FBXO31. Interacts (when phosphorylated at Ser-33) with CDC20, promoting ubiquitination by the APC/C complex. Post-translationally, phosphorylation at Ser-264 by ATM following gamma-irradiation results in its stabilization. Phosphorylation at Ser-448 in absence of stress promotes its ubiquitination and degradation by the SCF(FBXO46) complex. Phosphorylation at Ser-33 by AKT1 promotes association with CDC20 and ubiquitination by the APC/C complex. In terms of processing, ubiquitinated by the SCF(FBXO46) complex in absence of stress, promoting its degradation. Ubiquitinated by the APC/C complex following phosphorylation at Ser-33, leading to its degradation by the proteasome.

It localises to the cytoplasm. The protein resides in the cytoskeleton. It is found in the microtubule organizing center. The protein localises to the centrosome. Its pathway is protein modification; protein ubiquitination. Functionally, substrate-recognition component of the SCF(FBXO31) protein ligase complex, which specifically mediates the ubiquitination of proteins amidated at their C-terminus in response to oxidative stress, leading to their degradation by the proteasome. FBXO31 specifically recognizes and binds C-terminal peptides bearing an amide: C-terminal amidation in response to oxidative stress takes place following protein fragmentation. The SCF(FBXO31) also plays a role in G1 arrest following DNA damage by mediating ubiquitination of phosphorylated cyclin-D1 (CCND1), promoting its degradation by the proteasome, resulting in G1 arrest. The SCF(FBXO31) complex is however not a major regulator of CCND1 stability during the G1/S transition. In response to genotoxic stress, the SCF(FBXO31) complex directs ubiquitination and degradation of phosphorylated MDM2, thereby promoting p53/TP53-mediated DNA damage response. SCF(FBXO31) complex is required for genomic integrity by catalyzing ubiquitination and degradation of cyclin-A (CCNA1 and/or CCNA2) during the G1 phase. In response to genotoxic stress, the SCF(FBXO31) complex directs ubiquitination and degradation of phosphorylated FBXO46 and MAP2K6. SCF(FBXO31) complex promotes ubiquitination and degradation of CDT1 during the G2 phase to prevent re-replication. The SCF(FBXO31) complex also mediates ubiquitination and degradation of DUSP6, OGT and PARD6A. This chain is F-box only protein 31, found in Rattus norvegicus (Rat).